The following is a 240-amino-acid chain: Lipoprotein-releasing system ATP-binding protein LolD (240 aa).

The region spanning 15–240 is the ABC transporter domain; it reads IRAERLGKTY…GLRELTSAEV (226 aa). 51–58 lines the ATP pocket; it reads GASGAGKS.

Belongs to the ABC transporter superfamily. Lipoprotein translocase (TC 3.A.1.125) family. In terms of assembly, the complex is composed of two ATP-binding proteins (LolD) and two transmembrane proteins (LolC and LolE).

Its subcellular location is the cell inner membrane. In terms of biological role, part of the ABC transporter complex LolCDE involved in the translocation of mature outer membrane-directed lipoproteins, from the inner membrane to the periplasmic chaperone, LolA. Responsible for the formation of the LolA-lipoprotein complex in an ATP-dependent manner. This chain is Lipoprotein-releasing system ATP-binding protein LolD, found in Xylella fastidiosa (strain 9a5c).